A 438-amino-acid chain; its full sequence is MIRVLHLAPEAYPLAKVGGLADVVGALPKALRPLGVEAHVLLPWHGGLEARRVGEVAFAFFGREERAPLGERVEGGVRFLLLGVEGFGRERVYGYPDDAERYLRFALAAKEVARGYDLVHAHDWTAALLALYAPTVYTIHNLAHQGLVDPGLFFSWTGLPWSLFHMEALEFYGRVNLMKGGIVFARRVTTVRPSYAEEIQTPEFGMGLDGVLRRHAGKLRGILNGLDTEVFDPGKDPYLPAPYTREDPSGKARAKEVFRERTGLRPPVLAYVGRLDYQKGLDLVLKALPRLLEMGFRLYVQGVGDGGLQEAFLRAEEENPEGVRFLPAYDEAMARLAYAGAEAVLVPSRFEPCGLVQMIASRYGTPPVARAVGGLKDTVEDGRAGVLFETYHPEGLLYGVLRLFRLGAEEMGLRAMEKDFSWEGPARAYREVYREALG.

Lysine 16 is an ADP-alpha-D-glucose binding site.

Belongs to the glycosyltransferase 1 family. Bacterial/plant glycogen synthase subfamily.

It carries out the reaction [(1-&gt;4)-alpha-D-glucosyl](n) + ADP-alpha-D-glucose = [(1-&gt;4)-alpha-D-glucosyl](n+1) + ADP + H(+). It participates in glycan biosynthesis; glycogen biosynthesis. Its function is as follows. Synthesizes alpha-1,4-glucan chains using ADP-glucose. The polypeptide is Glycogen synthase (Thermus caldophilus).